We begin with the raw amino-acid sequence, 151 residues long: MTTETHTLHIEEILELLPHRYPFLLVDRVLDFEEGRFLRAVKNVSVNEPFFQGHFPGKPIFPGVLILEAMAQATGILAFKSVGKLEPGELYYFAGIDEARFKRPVVPGDQMVMEVTFEKTRRGVTRFKGVALVDGKVVCEATMMCARSREA.

His-54 is a catalytic residue.

This sequence belongs to the thioester dehydratase family. FabZ subfamily.

The protein resides in the cytoplasm. The catalysed reaction is a (3R)-hydroxyacyl-[ACP] = a (2E)-enoyl-[ACP] + H2O. In terms of biological role, involved in unsaturated fatty acids biosynthesis. Catalyzes the dehydration of short chain beta-hydroxyacyl-ACPs and long chain saturated and unsaturated beta-hydroxyacyl-ACPs. The chain is 3-hydroxyacyl-[acyl-carrier-protein] dehydratase FabZ from Cronobacter sakazakii (strain ATCC BAA-894) (Enterobacter sakazakii).